A 113-amino-acid chain; its full sequence is Urease subunit beta (113 aa).

Belongs to the urease beta subunit family. Heterotrimer of UreA (gamma), UreB (beta) and UreC (alpha) subunits. Three heterotrimers associate to form the active enzyme.

The protein localises to the cytoplasm. It catalyses the reaction urea + 2 H2O + H(+) = hydrogencarbonate + 2 NH4(+). It participates in nitrogen metabolism; urea degradation; CO(2) and NH(3) from urea (urease route): step 1/1. The sequence is that of Urease subunit beta from Cyanothece sp. (strain PCC 7425 / ATCC 29141).